We begin with the raw amino-acid sequence, 471 residues long: 3-isopropylmalate dehydratase large subunit (471 aa).

3 residues coordinate [4Fe-4S] cluster: C349, C409, and C412.

Belongs to the aconitase/IPM isomerase family. LeuC type 1 subfamily. In terms of assembly, heterodimer of LeuC and LeuD. [4Fe-4S] cluster is required as a cofactor.

The catalysed reaction is (2R,3S)-3-isopropylmalate = (2S)-2-isopropylmalate. The protein operates within amino-acid biosynthesis; L-leucine biosynthesis; L-leucine from 3-methyl-2-oxobutanoate: step 2/4. Its function is as follows. Catalyzes the isomerization between 2-isopropylmalate and 3-isopropylmalate, via the formation of 2-isopropylmaleate. The sequence is that of 3-isopropylmalate dehydratase large subunit from Aliivibrio fischeri (strain ATCC 700601 / ES114) (Vibrio fischeri).